The sequence spans 721 residues: Catalase-peroxidase 1 (721 aa).

The segment at residues 98–223 (WHAAGSYRVA…LAAVQMGLIY (126 aa)) is a cross-link (tryptophyl-tyrosyl-methioninium (Trp-Tyr) (with M-249)). The active-site Proton acceptor is His-99. Residues 223–249 (YVNPEGVNGQPDPLRTAQDVRVTFGRM) constitute a cross-link (tryptophyl-tyrosyl-methioninium (Tyr-Met) (with W-98)). His-264 provides a ligand contact to heme b.

The protein belongs to the peroxidase family. Peroxidase/catalase subfamily. In terms of assembly, homodimer or homotetramer. Heme b is required as a cofactor. Post-translationally, formation of the three residue Trp-Tyr-Met cross-link is important for the catalase, but not the peroxidase activity of the enzyme.

It carries out the reaction H2O2 + AH2 = A + 2 H2O. It catalyses the reaction 2 H2O2 = O2 + 2 H2O. Its function is as follows. Bifunctional enzyme with both catalase and broad-spectrum peroxidase activity. The sequence is that of Catalase-peroxidase 1 from Legionella pneumophila subsp. pneumophila (strain Philadelphia 1 / ATCC 33152 / DSM 7513).